Consider the following 267-residue polypeptide: Glutamate racemase (267 aa).

Residues 9-10 (DS) and 41-42 (YS) contribute to the substrate site. The Proton donor/acceptor role is filled by cysteine 73. 74–75 (NT) provides a ligand contact to substrate. The active-site Proton donor/acceptor is cysteine 184. Residue 185–186 (TH) participates in substrate binding.

This sequence belongs to the aspartate/glutamate racemases family.

It catalyses the reaction L-glutamate = D-glutamate. It functions in the pathway cell wall biogenesis; peptidoglycan biosynthesis. Its function is as follows. Provides the (R)-glutamate required for cell wall biosynthesis. This Actinobacillus pleuropneumoniae serotype 7 (strain AP76) protein is Glutamate racemase.